Consider the following 316-residue polypeptide: Acetylglutamate kinase (316 aa).

Substrate-binding positions include 65 to 66, arginine 87, and asparagine 179; that span reads GG.

The protein belongs to the acetylglutamate kinase family. ArgB subfamily.

Its subcellular location is the cytoplasm. The catalysed reaction is N-acetyl-L-glutamate + ATP = N-acetyl-L-glutamyl 5-phosphate + ADP. It functions in the pathway amino-acid biosynthesis; L-arginine biosynthesis; N(2)-acetyl-L-ornithine from L-glutamate: step 2/4. Its function is as follows. Catalyzes the ATP-dependent phosphorylation of N-acetyl-L-glutamate. This is Acetylglutamate kinase from Alkaliphilus metalliredigens (strain QYMF).